The following is a 22-amino-acid chain: Brevinin-1OKc (22 aa).

The residue at position 22 (Lys-22) is a Lysine amide.

In terms of tissue distribution, expressed by the skin glands.

The protein resides in the secreted. Antimicrobial peptide. Active against Gram-negative bacterium E.coli (MIC=6 uM) and against Gram-positive bacterium S.aureus (MIC=12.5 uM). The polypeptide is Brevinin-1OKc (Nidirana okinavana (Kampira Falls frog)).